A 450-amino-acid polypeptide reads, in one-letter code: MSSLSQAASSVEKRTNARYWIVVMLFIVTSFNYGDRATLSIAGSEMAKDIGLDPVGMGYVFSAFSWAYVIGQIPGGWLLDRFGSKRVYFWSIFIWSMFTLLQGFVDIFSGFGIIVALFTLRFLVGLAEAPSFPGNSRIVAAWFPAQERGTAVSIFNSAQYFATVIFAPIMGWLTHEVGWSHVFFFMGGLGIVISFIWLKVIHEPNQHPGVNKKELEYIAAGGALINMDQQNTKVKVPFSVKWGQIKQLLGSRMMIGVYIGQYCINALTYFFITWFPVYLVQARGMSILKAGFVASVPAVCGFIGGVLGGIISDWLMRRTGSLNIARKTPIVMGMLLSMVMVFCNYVNVEWMIIGFMALAFFGKGIGALGWAVMADTAPKEISGLSGGLFNMFGNISGIVTPIAIGYIVGTTGSFNGALIYVGVHALIAVLSYLVLVGDIKRIELKPVAGQ.

The Cytoplasmic portion of the chain corresponds to 1–20; that stretch reads MSSLSQAASSVEKRTNARYW. A helical membrane pass occupies residues 21-41; it reads IVVMLFIVTSFNYGDRATLSI. The Periplasmic segment spans residues 42–58; sequence AGSEMAKDIGLDPVGMG. A helical membrane pass occupies residues 59–79; that stretch reads YVFSAFSWAYVIGQIPGGWLL. Topologically, residues 80 to 85 are cytoplasmic; sequence DRFGSK. A helical membrane pass occupies residues 86 to 105; sequence RVYFWSIFIWSMFTLLQGFV. Residues 106–109 lie on the Periplasmic side of the membrane; it reads DIFS. A helical membrane pass occupies residues 110–132; the sequence is GFGIIVALFTLRFLVGLAEAPSF. The Cytoplasmic segment spans residues 133–153; that stretch reads PGNSRIVAAWFPAQERGTAVS. The chain crosses the membrane as a helical span at residues 154 to 174; that stretch reads IFNSAQYFATVIFAPIMGWLT. The Periplasmic portion of the chain corresponds to 175-176; the sequence is HE. The chain crosses the membrane as a helical span at residues 177-197; the sequence is VGWSHVFFFMGGLGIVISFIW. Topologically, residues 198-254 are cytoplasmic; sequence LKVIHEPNQHPGVNKKELEYIAAGGALINMDQQNTKVKVPFSVKWGQIKQLLGSRMM. A helical membrane pass occupies residues 255 to 275; the sequence is IGVYIGQYCINALTYFFITWF. The Periplasmic segment spans residues 276 to 290; sequence PVYLVQARGMSILKA. Residues 291–311 form a helical membrane-spanning segment; it reads GFVASVPAVCGFIGGVLGGII. Over 312–329 the chain is Cytoplasmic; that stretch reads SDWLMRRTGSLNIARKTP. A helical membrane pass occupies residues 330-350; that stretch reads IVMGMLLSMVMVFCNYVNVEW. Met351 is a topological domain (periplasmic). Residues 352–372 traverse the membrane as a helical segment; it reads IIGFMALAFFGKGIGALGWAV. Topologically, residues 373–387 are cytoplasmic; that stretch reads MADTAPKEISGLSGG. A helical membrane pass occupies residues 388–408; it reads LFNMFGNISGIVTPIAIGYIV. Topologically, residues 409-415 are periplasmic; that stretch reads GTTGSFN. Residues 416 to 436 form a helical membrane-spanning segment; sequence GALIYVGVHALIAVLSYLVLV. At 437-450 the chain is on the cytoplasmic side; sequence GDIKRIELKPVAGQ.

It belongs to the major facilitator superfamily. Phthalate permease family.

It localises to the cell inner membrane. It carries out the reaction galactarate(in) + H(+)(in) = galactarate(out) + H(+)(out). It catalyses the reaction D-glucarate(in) + H(+)(in) = D-glucarate(out) + H(+)(out). The catalysed reaction is (R)-glycerate(in) + H(+)(in) = (R)-glycerate(out) + H(+)(out). In terms of biological role, probably involved in the uptake of galactarate and/or D-glucarate. May also transport D-glycerate. The chain is Probable galactarate/D-glucarate transporter GudP from Escherichia coli (strain K12).